We begin with the raw amino-acid sequence, 55 residues long: Large ribosomal subunit protein bL33 (55 aa).

This sequence belongs to the bacterial ribosomal protein bL33 family.

The chain is Large ribosomal subunit protein bL33 from Proteus mirabilis (strain HI4320).